We begin with the raw amino-acid sequence, 521 residues long: Vang-like protein 2 (521 aa).

Residues 1 to 81 are disordered; the sequence is MDNDSQYSGY…TTVVTGTSEH (81 aa). Residues 1–108 lie on the Cytoplasmic side of the membrane; that stretch reads MDNDSQYSGY…AKLDCSRHLG (108 aa). Residues 15–33 show a composition bias toward basic residues; that stretch reads GHSRSSRKHRDRRERHRSK. Basic and acidic residues predominate over residues 57–67; that stretch reads ESTRGEDRDDN. Low complexity predominate over residues 69–81; sequence GETTTVVTGTSEH. Residues 109–129 form a helical membrane-spanning segment; that stretch reads VVIGGALALLSFLTPIAFMLL. Over 130 to 147 the chain is Extracellular; it reads PQILWREDLEQCGTACEG. The helical transmembrane segment at 148–168 threads the bilayer; that stretch reads LFISVAFKLLILLLGSWALFF. Topologically, residues 169 to 178 are cytoplasmic; that stretch reads RRPKAFFPRV. The helical transmembrane segment at 179–199 threads the bilayer; sequence FVFRALLMVLVFLLVVSYWLF. The Extracellular segment spans residues 200 to 218; the sequence is YGVRILESRDKNYQGIVQY. Residues 219-239 form a helical membrane-spanning segment; it reads AVSLVDALLFVHYLAVVLLEL. At 240–521 the chain is on the cytoplasmic side; that stretch reads RQLQPQFTVK…VMRLQSETSV (282 aa). The PDZ-binding signature appears at 518–521; sequence ETSV.

The protein belongs to the Vang family. Interacts with dvl/dsh. Interacts with prickle3.

Its subcellular location is the cell membrane. Has a role in non-canonical Wnt/planar cell polarity (PCP) signaling; can recruit dvl/dsh and prickle from the cytoplasm to the plasma membrane. Acts in a PCP complex to regulate the polarized assembly of fibronectrin on the surface of the mesoderm during gastrulation. Regulates convergent extension in both dorsal mesoderm and neural tissue without affecting cell fate. Regulates neural fold closure during neurulation. May be required for cell surface localization of fzd3 and fzd6 in the inner ear. In Xenopus tropicalis (Western clawed frog), this protein is Vang-like protein 2.